A 249-amino-acid polypeptide reads, in one-letter code: NADH dehydrogenase [ubiquinone] flavoprotein 2, mitochondrial (249 aa).

The transit peptide at 1 to 32 (MFFSAALRARAAGLTAQWGRHVRNLHKTAMQN) directs the protein to the mitochondrion. The residue at position 61 (lysine 61) is an N6-acetyllysine. Residues cysteine 135, cysteine 140, cysteine 176, and cysteine 180 each coordinate [2Fe-2S] cluster. Tyrosine 193 is modified (phosphotyrosine; by SRC). Residues 213–249 (IPKPGPRSGRFSCEPAGGLTSLTEPPKGPGFGVQAGL) are disordered.

The protein belongs to the complex I 24 kDa subunit family. Core subunit of respiratory chain NADH dehydrogenase (Complex I) which is composed of 45 different subunits. This is a component of the flavoprotein-sulfur (FP) fragment of the enzyme. It depends on [2Fe-2S] cluster as a cofactor.

The protein localises to the mitochondrion inner membrane. It carries out the reaction a ubiquinone + NADH + 5 H(+)(in) = a ubiquinol + NAD(+) + 4 H(+)(out). Functionally, core subunit of the mitochondrial membrane respiratory chain NADH dehydrogenase (Complex I) which catalyzes electron transfer from NADH through the respiratory chain, using ubiquinone as an electron acceptor. Parts of the peripheral arm of the enzyme, where the electrons from NADH are accepted by flavin mononucleotide (FMN) and then passed along a chain of iron-sulfur clusters by electron tunnelling to the final acceptor ubiquinone. Contains one iron-sulfur cluster. The sequence is that of NADH dehydrogenase [ubiquinone] flavoprotein 2, mitochondrial from Gorilla gorilla gorilla (Western lowland gorilla).